Here is a 124-residue protein sequence, read N- to C-terminus: Small ribosomal subunit protein bS6 (124 aa).

Positions 99–124 (PLPAPRIVPGSEPEPVEQQEAAAVEA) are disordered. Residues 114-124 (VEQQEAAAVEA) are compositionally biased toward low complexity.

This sequence belongs to the bacterial ribosomal protein bS6 family.

In terms of biological role, binds together with bS18 to 16S ribosomal RNA. The sequence is that of Small ribosomal subunit protein bS6 from Prochlorococcus marinus (strain MIT 9303).